The chain runs to 938 residues: Isoleucine--tRNA ligase (938 aa).

A 'HIGH' region motif is present at residues 58 to 68; sequence PYANGSIHIGH. Glutamate 561 is a binding site for L-isoleucyl-5'-AMP. Positions 602–606 match the 'KMSKS' region motif; that stretch reads KMSKS. Lysine 605 is an ATP binding site. Cysteine 901, cysteine 904, cysteine 921, and cysteine 924 together coordinate Zn(2+).

It belongs to the class-I aminoacyl-tRNA synthetase family. IleS type 1 subfamily. In terms of assembly, monomer. Zn(2+) is required as a cofactor.

It localises to the cytoplasm. It carries out the reaction tRNA(Ile) + L-isoleucine + ATP = L-isoleucyl-tRNA(Ile) + AMP + diphosphate. Functionally, catalyzes the attachment of isoleucine to tRNA(Ile). As IleRS can inadvertently accommodate and process structurally similar amino acids such as valine, to avoid such errors it has two additional distinct tRNA(Ile)-dependent editing activities. One activity is designated as 'pretransfer' editing and involves the hydrolysis of activated Val-AMP. The other activity is designated 'posttransfer' editing and involves deacylation of mischarged Val-tRNA(Ile). This is Isoleucine--tRNA ligase from Serratia proteamaculans (strain 568).